Reading from the N-terminus, the 179-residue chain is Large ribosomal subunit protein uL6 (179 aa).

This sequence belongs to the universal ribosomal protein uL6 family. In terms of assembly, part of the 50S ribosomal subunit.

Its function is as follows. This protein binds to the 23S rRNA, and is important in its secondary structure. It is located near the subunit interface in the base of the L7/L12 stalk, and near the tRNA binding site of the peptidyltransferase center. The protein is Large ribosomal subunit protein uL6 of Metamycoplasma arthritidis (strain 158L3-1) (Mycoplasma arthritidis).